Reading from the N-terminus, the 524-residue chain is Excitatory amino acid transporter 3 (524 aa).

Over 1–18 the chain is Cytoplasmic; that stretch reads MGKPARKGCDWKRFLRNN. The helical transmembrane segment at 19–38 threads the bilayer; that stretch reads WLLLSTVVAVVLGIVIGVLV. Residues 39 to 61 lie on the Extracellular side of the membrane; it reads REYSKLSNLEKFYFSFPGEILMR. Residues 62-82 form a helical membrane-spanning segment; the sequence is MLKLVILPLIVSSMITGVATL. The Cytoplasmic portion of the chain corresponds to 83-93; that stretch reads DSNVSGKIGLR. A helical transmembrane segment spans residues 94–114; it reads AVVYYFCTTLIAVILGIVLVV. The Na(+) site is built by Tyr-98, Thr-101, and Thr-102. Over 115–205 the chain is Extracellular; it reads SIKPGVTQKV…KTKEYKVVGM (91 aa). Asn-178 and Asn-195 each carry an N-linked (GlcNAc...) asparagine glycan. A helical membrane pass occupies residues 206–229; the sequence is YSDGINVLGLIVFCLVLGIVIGRK. Over 230-238 the chain is Cytoplasmic; it reads WEKGQILVD. The chain crosses the membrane as a helical span at residues 239–266; that stretch reads FFNALSDATMKIVQIIMCYMPIGILFLI. Residues 267–286 lie on the Extracellular side of the membrane; sequence AGKIIEVEDWEIFRKLGLYM. Residues 287 to 308 traverse the membrane as a helical segment; it reads ATVLSGLAIHSIVILPLIYFII. The Cytoplasmic segment spans residues 309 to 313; it reads VRKNP. An intramembrane region (discontinuously helical) is located at residues 314–344; sequence FQFAMGMAQALLTALMISSSSATLPVTFRCA. Positions 331 and 333 each coordinate L-aspartate. Residues 345 to 353 are Cytoplasmic-facing; it reads EEKNRVDKR. A helical membrane pass occupies residues 354-380; that stretch reads ITRFVLPVGATINMDGTALYEAVAAVF. Na(+) contacts are provided by Gly-362, Thr-364, Asn-366, and Asp-368. L-aspartate is bound at residue Thr-370. Over 381-393 the chain is Extracellular; sequence IAQLNDLDLSVGQ. Positions 394 to 427 form an intramembrane region, discontinuously helical; that stretch reads IITISVTATAASIGAAGVPQPGLVTMVIVLSAVG. Na(+)-binding residues include Ser-405, Ile-406, and Ala-408. Val-411 lines the L-aspartate pocket. Residues 428-440 are Extracellular-facing; the sequence is LPAEDVTLIIAVD. A helical membrane pass occupies residues 441–462; the sequence is WLLDRFRTMVNVLGDAFGTGIV. The L-aspartate site is built by Arg-447, Thr-448, and Asn-451. Residues Asn-451 and Asp-455 each contribute to the Na(+) site. The Cytoplasmic segment spans residues 463–524; it reads EKLSKKELEQ…TISFTQTSQF (62 aa). Phosphoserine is present on residues Ser-517 and Ser-522.

This sequence belongs to the dicarboxylate/amino acid:cation symporter (DAACS) (TC 2.A.23) family. SLC1A1 subfamily. In terms of assembly, homotrimer. Interacts with ARL6IP5. Interacts with RTN2 (via N-terminus); the interaction promotes cell surface expression of SLC1A1. Interacts with SORCS2; this interaction is important for normal expression at the cell membrane.

The protein localises to the cell membrane. It is found in the apical cell membrane. It localises to the synapse. Its subcellular location is the synaptosome. The protein resides in the early endosome membrane. The protein localises to the late endosome membrane. It is found in the recycling endosome membrane. It catalyses the reaction K(+)(in) + L-glutamate(out) + 3 Na(+)(out) + H(+)(out) = K(+)(out) + L-glutamate(in) + 3 Na(+)(in) + H(+)(in). It carries out the reaction K(+)(in) + L-aspartate(out) + 3 Na(+)(out) + H(+)(out) = K(+)(out) + L-aspartate(in) + 3 Na(+)(in) + H(+)(in). The enzyme catalyses D-aspartate(out) + K(+)(in) + 3 Na(+)(out) + H(+)(out) = D-aspartate(in) + K(+)(out) + 3 Na(+)(in) + H(+)(in). The catalysed reaction is K(+)(in) + L-cysteine(out) + 3 Na(+)(out) + H(+)(out) = K(+)(out) + L-cysteine(in) + 3 Na(+)(in) + H(+)(in). In terms of biological role, sodium-dependent, high-affinity amino acid transporter that mediates the uptake of L-glutamate and also L-aspartate and D-aspartate. Can also transport L-cysteine. Functions as a symporter that transports one amino acid molecule together with two or three Na(+) ions and one proton, in parallel with the counter-transport of one K(+) ion. Mediates Cl(-) flux that is not coupled to amino acid transport; this avoids the accumulation of negative charges due to aspartate and Na(+) symport. Plays an important role in L-glutamate and L-aspartate reabsorption in renal tubuli. Plays a redundant role in the rapid removal of released glutamate from the synaptic cleft, which is essential for terminating the postsynaptic action of glutamate. Contributes to glutathione biosynthesis and protection against oxidative stress via its role in L-glutamate and L-cysteine transport. Negatively regulated by ARL6IP5. The sequence is that of Excitatory amino acid transporter 3 (SLC1A1) from Bos taurus (Bovine).